Here is a 763-residue protein sequence, read N- to C-terminus: G protein-regulated inducer of neurite outgrowth 3 (763 aa).

Disordered stretches follow at residues 1–48 (MGTV…IGNV), 65–111 (QACV…APGL), and 192–268 (ENSQ…GATC). Residues 27–44 (ESQSVSPQPAQPDNNASG) show a composition bias toward polar residues. A compositionally biased stretch (basic and acidic residues) spans 93-104 (KTPDDFLLHGSK). The segment covering 237-250 (ENKQPSATALNTTA) has biased composition (polar residues). Residues S323 and S359 each carry the phosphoserine modification. Disordered regions lie at residues 420–452 (TSSQNTETEEDLRLSASKEATSRQPEGTNPDFQ), 471–624 (NQGL…PRRG), and 711–737 (VKTQSGQTRRSISSDSSSSKKLKGRQH). The span at 437–450 (KEATSRQPEGTNPD) shows a compositional bias: polar residues. 2 stretches are compositionally biased toward basic and acidic residues: residues 480–496 (REPEIVVKTAKDHKAES) and 518–539 (PTDKKGAKDKKPASPLIVKDHA). Over residues 593 to 609 (SLSLPSDGTGDSSPGSG) the composition is skewed to low complexity.

Its function is as follows. May be involved in neurite outgrowth. This is G protein-regulated inducer of neurite outgrowth 3 (Gprin3) from Mus musculus (Mouse).